The following is an 815-amino-acid chain: 1,4-alpha-glucan branching enzyme GlgB (815 aa).

Asp-405 (nucleophile) is an active-site residue. The active-site Proton donor is the Glu-458.

Belongs to the glycosyl hydrolase 13 family. GlgB subfamily. As to quaternary structure, monomer.

The enzyme catalyses Transfers a segment of a (1-&gt;4)-alpha-D-glucan chain to a primary hydroxy group in a similar glucan chain.. It participates in glycan biosynthesis; glycogen biosynthesis. Catalyzes the formation of the alpha-1,6-glucosidic linkages in glycogen by scission of a 1,4-alpha-linked oligosaccharide from growing alpha-1,4-glucan chains and the subsequent attachment of the oligosaccharide to the alpha-1,6 position. The protein is 1,4-alpha-glucan branching enzyme GlgB of Histophilus somni (strain 2336) (Haemophilus somnus).